A 331-amino-acid polypeptide reads, in one-letter code: Sideroflexin-5 (331 aa).

4 consecutive transmembrane segments (helical) span residues 104–126, 153–175, 243–265, and 278–300; these read PFGW…LLFW, YIGA…TYFI, TTMV…MPYL, and HIFV…ALAL.

The protein belongs to the sideroflexin family.

It is found in the mitochondrion inner membrane. The enzyme catalyses citrate(in) = citrate(out). Functionally, mitochondrial amino-acid transporter. The protein is Sideroflexin-5 of Caenorhabditis elegans.